We begin with the raw amino-acid sequence, 185 residues long: Small ribosomal subunit protein uS4c (185 aa).

One can recognise an S4 RNA-binding domain in the interval 72–134 (MRLDNVIFRL…PTSCNALKGE (63 aa)). The interval 132 to 154 (KGESPGGGETPDHLTASLSEGSR) is disordered.

It belongs to the universal ribosomal protein uS4 family. As to quaternary structure, part of the 30S ribosomal subunit. Contacts protein S5. The interaction surface between S4 and S5 is involved in control of translational fidelity.

The protein resides in the plastid. The protein localises to the chloroplast. In terms of biological role, one of the primary rRNA binding proteins, it binds directly to 16S rRNA where it nucleates assembly of the body of the 30S subunit. Functionally, with S5 and S12 plays an important role in translational accuracy. In Woodwardia radicans (Rooting chainfern), this protein is Small ribosomal subunit protein uS4c (rps4).